Here is a 157-residue protein sequence, read N- to C-terminus: Small ribosomal subunit protein uS7 (157 aa).

This sequence belongs to the universal ribosomal protein uS7 family. In terms of assembly, part of the 30S ribosomal subunit. Contacts proteins S9 and S11.

Its function is as follows. One of the primary rRNA binding proteins, it binds directly to 16S rRNA where it nucleates assembly of the head domain of the 30S subunit. Is located at the subunit interface close to the decoding center, probably blocks exit of the E-site tRNA. This is Small ribosomal subunit protein uS7 from Leptospira biflexa serovar Patoc (strain Patoc 1 / Ames).